The following is a 111-amino-acid chain: Universal stress protein B (111 aa).

2 helical membrane-spanning segments follow: residues 1–21 (MIST…NMAR) and 90–110 (FILT…LLIW).

The protein belongs to the universal stress protein B family.

The protein localises to the cell inner membrane. The sequence is that of Universal stress protein B from Escherichia fergusonii (strain ATCC 35469 / DSM 13698 / CCUG 18766 / IAM 14443 / JCM 21226 / LMG 7866 / NBRC 102419 / NCTC 12128 / CDC 0568-73).